The following is a 225-amino-acid chain: Glycerol-3-phosphate acyltransferase (225 aa).

6 consecutive transmembrane segments (helical) span residues 1–21 (MAIW…LGSF), 56–76 (GPGL…VALV), 95–115 (IGLW…LGHS), 134–154 (VLLV…ALVV), 159–178 (IVSL…MFVA), and 182–201 (LAYV…RHWA).

The protein belongs to the PlsY family. Probably interacts with PlsX.

Its subcellular location is the cell inner membrane. The catalysed reaction is an acyl phosphate + sn-glycerol 3-phosphate = a 1-acyl-sn-glycero-3-phosphate + phosphate. It functions in the pathway lipid metabolism; phospholipid metabolism. Functionally, catalyzes the transfer of an acyl group from acyl-phosphate (acyl-PO(4)) to glycerol-3-phosphate (G3P) to form lysophosphatidic acid (LPA). This enzyme utilizes acyl-phosphate as fatty acyl donor, but not acyl-CoA or acyl-ACP. The protein is Glycerol-3-phosphate acyltransferase of Acaryochloris marina (strain MBIC 11017).